We begin with the raw amino-acid sequence, 64 residues long: uncharacterized protein (64 aa).

In terms of tissue distribution, widely expressed; not found in breast.

This is an uncharacterized protein from Homo sapiens (Human).